We begin with the raw amino-acid sequence, 56 residues long: MPLTDQAKIQIVQERVFIKKVCRNCGALNSIRATKCRRCHSTNLRPKKKELPTKRA.

This sequence belongs to the eukaryotic ribosomal protein eL40 family.

In Metallosphaera sedula (strain ATCC 51363 / DSM 5348 / JCM 9185 / NBRC 15509 / TH2), this protein is Large ribosomal subunit protein eL40.